A 254-amino-acid chain; its full sequence is 4-hydroxy-tetrahydrodipicolinate reductase (254 aa).

An NAD(+)-binding site is contributed by 7–12 (GASGRI). Arg-35 is an NADP(+) binding site. NAD(+) is bound by residues 91–93 (GTT) and 115–118 (AHNM). Catalysis depends on His-147, which acts as the Proton donor/acceptor. His-148 provides a ligand contact to (S)-2,3,4,5-tetrahydrodipicolinate. Lys-151 (proton donor) is an active-site residue. 157–158 (GT) provides a ligand contact to (S)-2,3,4,5-tetrahydrodipicolinate.

It belongs to the DapB family.

It is found in the cytoplasm. It catalyses the reaction (S)-2,3,4,5-tetrahydrodipicolinate + NAD(+) + H2O = (2S,4S)-4-hydroxy-2,3,4,5-tetrahydrodipicolinate + NADH + H(+). It carries out the reaction (S)-2,3,4,5-tetrahydrodipicolinate + NADP(+) + H2O = (2S,4S)-4-hydroxy-2,3,4,5-tetrahydrodipicolinate + NADPH + H(+). Its pathway is amino-acid biosynthesis; L-lysine biosynthesis via DAP pathway; (S)-tetrahydrodipicolinate from L-aspartate: step 4/4. Catalyzes the conversion of 4-hydroxy-tetrahydrodipicolinate (HTPA) to tetrahydrodipicolinate. This chain is 4-hydroxy-tetrahydrodipicolinate reductase, found in Helicobacter pylori (strain HPAG1).